The following is a 332-amino-acid chain: L-lactate dehydrogenase C chain (332 aa).

Blocked amino end (Ser) is present on serine 2. NAD(+) is bound by residues 29–57 (GNVG…DENK) and arginine 99. Residues arginine 106, asparagine 138, and arginine 169 each coordinate substrate. Asparagine 138 serves as a coordination point for NAD(+). Histidine 193 (proton acceptor) is an active-site residue. Residue threonine 248 participates in substrate binding.

Belongs to the LDH/MDH superfamily. LDH family. Homotetramer. Interacts with RABL2/RABL2A; binds preferentially to GTP-bound RABL2.

It localises to the cytoplasm. It carries out the reaction (S)-lactate + NAD(+) = pyruvate + NADH + H(+). It participates in fermentation; pyruvate fermentation to lactate; (S)-lactate from pyruvate: step 1/1. Functionally, possible role in sperm motility. The sequence is that of L-lactate dehydrogenase C chain (Ldhc) from Rattus norvegicus (Rat).